The chain runs to 257 residues: MKIFRLPALSDNYIFLLHDPQRNIAAVVDPAEPEPVLTCLKKLGAELVTIFNTHHHGDHVGANRALIEHFPNLTVYGGEEDRGRIPGQEVFLKEGDRVQFGDRSGEVFFVPGHTRAHIAYYFPPQGEEETGELFCGDTIFAGGCGRLFEGTPAQMVNSLSKLRALPDNTRIWCAHEYTLNNLKFALTVEPENIDLQNRFSDVKIARSEGEATVPSLLGIEKLTNPFLRWDTQAIKSAMGSQDSVQVFGRLRGKKDNF.

Residues His54, His56, Asp58, His59, His113, Asp137, and His175 each contribute to the Zn(2+) site.

Belongs to the metallo-beta-lactamase superfamily. Glyoxalase II family. In terms of assembly, monomer. Zn(2+) is required as a cofactor.

It catalyses the reaction an S-(2-hydroxyacyl)glutathione + H2O = a 2-hydroxy carboxylate + glutathione + H(+). It participates in secondary metabolite metabolism; methylglyoxal degradation; (R)-lactate from methylglyoxal: step 2/2. In terms of biological role, thiolesterase that catalyzes the hydrolysis of S-D-lactoyl-glutathione to form glutathione and D-lactic acid. The polypeptide is Hydroxyacylglutathione hydrolase (Gloeothece citriformis (strain PCC 7424) (Cyanothece sp. (strain PCC 7424))).